The following is a 103-amino-acid chain: N(4)-acetylcytidine amidohydrolase (103 aa).

The 95-residue stretch at 6 to 100 folds into the ASCH domain; the sequence is ITFFQRFQDD…GESQFYVIEF (95 aa). The Proton acceptor role is filled by K21. The active-site Nucleophile is the T24. E74 serves as the catalytic Proton donor.

This sequence belongs to the N(4)-acetylcytidine amidohydrolase family.

It carries out the reaction N(4)-acetylcytidine + H2O = cytidine + acetate + H(+). The enzyme catalyses N(4)-acetyl-2'-deoxycytidine + H2O = 2'-deoxycytidine + acetate + H(+). It catalyses the reaction N(4)-acetylcytosine + H2O = cytosine + acetate + H(+). Its function is as follows. Catalyzes the hydrolysis of N(4)-acetylcytidine (ac4C). This Klebsiella pneumoniae subsp. pneumoniae (strain ATCC 700721 / MGH 78578) protein is N(4)-acetylcytidine amidohydrolase.